Consider the following 523-residue polypeptide: MVAPGLVLGLVLPLILWADRSAGIGFRFASYINNDMVLQKEPAGAVIWGFGTPGATVTVTLRQGQETIMKKVTSVKAHSDTWMVVLDPMKPGGPFEVMAQQTLEKINFTLRVHDVLFGDVWLCSGQSNMQMTVLQIFNATRELSNTAAYQSVRILSVSPIQAEQELEDLVAVDLQWSKPTSENLGHGYFKYMSAVCWLFGRHLYDTLQYPIGLIASSWGGTPIEAWSSGRSLKACGVPKQGSIPYDSVTGPSKHSVLWNAMIHPLCNMTLKGVVWYQGESNINYNTDLYNCTFPALIEDWRETFHRGSQGQTERFFPFGLVQLSSDLSKKSSDDGFPQIRWHQTADFGYVPNPKMPNTFMAVAMDLCDRDSPFGSIHPRDKQTVAYRLHLGARALAYGEKNLTFEGPLPEKIELLAHKGLLNLTYYQQIQVQKKDNKIFEISCCSDHRCKWLPASMNTVSTQSLTLAIDSCHGTVVALRYAWTTWPCEYKQCPLYHPSSALPAPPFIAFITDQGPGHQSNVAK.

Residues 1 to 23 form the signal peptide; the sequence is MVAPGLVLGLVLPLILWADRSAG. 6 N-linked (GlcNAc...) asparagine glycosylation sites follow: Asn107, Asn138, Asn267, Asn290, Asn401, and Asn422.

As to expression, widely expressed with high expression in the testis, prostate, and colon.

It localises to the lysosome. The protein resides in the cytoplasm. It catalyses the reaction N-acetyl-9-O-acetylneuraminate + H2O = N-acetylneuraminate + acetate + H(+). The enzyme catalyses an Ac-O-9-sialoglycoconjugate + H2O = a sialoglycoconjugate + acetate + H(+). Functionally, catalyzes the removal of O-acetyl ester groups from position 9 of the free diacetylated sialate N-acetyl-9-O-acetylneuraminate (Neu5,9Ac2) in the cytosol and of the diacetylated sialate residues of sialylglycoconjugates in the lysosomes. Together with the sialate-O-acetyltransferase they regulate the balance of acetylated sialoglycoconjugates, key players in various processes such as cell-cell interactions, host-pathogen recognition, and tumor antigenicity. This is Sialate O-acetylesterase (SIAE) from Homo sapiens (Human).